The chain runs to 222 residues: Charged multivesicular body protein 4a (222 aa).

Disordered regions lie at residues 1 to 21 (MSGLGRLFGRGKKEKGPTPEE) and 177 to 222 (LLHV…EWVS). Positions 1 to 116 (MSGLGRLFGR…ELAAQGLKKA (116 aa)) are interaction with phosphoinosides. The interval 1 to 150 (MSGLGRLFGR…QISDAISRPV (150 aa)) is intramolecular interaction with C-terminus. Coiled coils occupy residues 20-105 (EEAI…VLRT) and 155-180 (DVDEDELLEELEELEQEELARELLHV). The intramolecular interaction with N-terminus stretch occupies residues 151 to 222 (GFGDDVDEDE…ELKQLAEWVS (72 aa)). Ser196 bears the Phosphoserine mark.

The protein belongs to the SNF7 family. In terms of assembly, probable core component of the endosomal sorting required for transport complex III (ESCRT-III). ESCRT-III components are thought to multimerize to form a flat lattice on the perimeter membrane of the endosome. Several assembly forms of ESCRT-III may exist that interact and act sequentially. Self-associates; overexpression leads to the assembly of filaments that curve and associate to create circular rings. Interacts with CHMP2A. Interacts with CHMP3; the interaction requires the release of CHMP4A autoinhibition. Interacts with CHMP4B. Interacts with CHMP4C. Interacts with CHMP6. Interacts with VPS4A. Interacts with PDCD6IP; the interaction is direct.

The protein localises to the cytoplasmic vesicle membrane. It localises to the late endosome membrane. Functionally, probable core component of the endosomal sorting required for transport complex III (ESCRT-III) which is involved in multivesicular bodies (MVBs) formation and sorting of endosomal cargo proteins into MVBs. MVBs contain intraluminal vesicles (ILVs) that are generated by invagination and scission from the limiting membrane of the endosome and mostly are delivered to lysosomes enabling degradation of membrane proteins, such as stimulated growth factor receptors, lysosomal enzymes and lipids. The MVB pathway appears to require the sequential function of ESCRT-O, -I,-II and -III complexes. ESCRT-III proteins mostly dissociate from the invaginating membrane before the ILV is released. The ESCRT machinery also functions in topologically equivalent membrane fission events, such as the terminal stages of cytokinesis and the budding of enveloped viruses (lentiviruses). ESCRT-III proteins are believed to mediate the necessary vesicle extrusion and/or membrane fission activities, possibly in conjunction with the AAA ATPase VPS4. When overexpressed, membrane-assembled circular arrays of CHMP4A filaments can promote or stabilize negative curvature and outward budding. CHMP4A/B/C are required for the exosomal release of SDCBP, CD63 and syndecan. This is Charged multivesicular body protein 4a (CHMP4A) from Bos taurus (Bovine).